The following is a 162-amino-acid chain: Ribosome maturation factor RimP (162 aa).

This sequence belongs to the RimP family.

Its subcellular location is the cytoplasm. Required for maturation of 30S ribosomal subunits. This chain is Ribosome maturation factor RimP, found in Syntrophotalea carbinolica (strain DSM 2380 / NBRC 103641 / GraBd1) (Pelobacter carbinolicus).